We begin with the raw amino-acid sequence, 407 residues long: Transmembrane protein 184B (407 aa).

The segment at 1-24 (MTVRGAALAPDPASPTTAAASPSI) is disordered. A run of 7 helical transmembrane segments spans residues 40-60 (FLMT…ALLI), 84-104 (ILFI…FFTN), 121-141 (LVIY…SSIM), 178-198 (LQFC…QAFG), 214-234 (VTII…LFYF), 249-269 (FFMV…LAIL), and 290-310 (VAAG…ALAL). The tract at residues 369-395 (TLEPGPTWRGGAHGLSRSHSLSGARDN) is disordered. A phosphoserine mark is found at Ser388, Ser402, and Ser403.

It belongs to the TMEM184 family.

The protein localises to the membrane. Functionally, may activate the MAP kinase signaling pathway. This Bos taurus (Bovine) protein is Transmembrane protein 184B (TMEM184B).